The sequence spans 250 residues: 3-deoxy-manno-octulosonate cytidylyltransferase (250 aa).

The protein belongs to the KdsB family.

The protein localises to the cytoplasm. The catalysed reaction is 3-deoxy-alpha-D-manno-oct-2-ulosonate + CTP = CMP-3-deoxy-beta-D-manno-octulosonate + diphosphate. The protein operates within nucleotide-sugar biosynthesis; CMP-3-deoxy-D-manno-octulosonate biosynthesis; CMP-3-deoxy-D-manno-octulosonate from 3-deoxy-D-manno-octulosonate and CTP: step 1/1. It participates in bacterial outer membrane biogenesis; lipopolysaccharide biosynthesis. In terms of biological role, activates KDO (a required 8-carbon sugar) for incorporation into bacterial lipopolysaccharide in Gram-negative bacteria. The sequence is that of 3-deoxy-manno-octulosonate cytidylyltransferase from Francisella tularensis subsp. novicida (strain U112).